The following is a 631-amino-acid chain: tRNA uridine 5-carboxymethylaminomethyl modification enzyme MnmG (631 aa).

FAD is bound by residues 13 to 18, valine 125, and serine 180; that span reads GGGHAG. 273 to 287 is an NAD(+) binding site; it reads GPRYCPSIEDKVMRF. An FAD-binding site is contributed by glutamine 370.

The protein belongs to the MnmG family. Homodimer. Heterotetramer of two MnmE and two MnmG subunits. FAD serves as cofactor.

The protein localises to the cytoplasm. Its function is as follows. NAD-binding protein involved in the addition of a carboxymethylaminomethyl (cmnm) group at the wobble position (U34) of certain tRNAs, forming tRNA-cmnm(5)s(2)U34. The chain is tRNA uridine 5-carboxymethylaminomethyl modification enzyme MnmG from Vibrio campbellii (strain ATCC BAA-1116).